A 512-amino-acid polypeptide reads, in one-letter code: Metal transporter Nramp4 (512 aa).

The next 12 helical transmembrane spans lie at 52–72, 80–100, 129–149, 161–181, 189–209, 235–255, 277–297, 323–343, 371–391, 402–422, 440–460, and 468–488; these read LWLFTGPGFLMSIAFLDPGNL, AIAGYSLIWLLMWATAIGLLI, MVLWIMAEIALIGADIQEVIG, LVPLWAGVVITALDCFIFLFL, LEAVFAILIATMALAFAWMFG, AVGIVGCIIMPHNVFLHSALV, IESTGALAVSFIINVFVTTVF, YGGGFFPILYIWAIGVLAAGQ, ALITRSCAIIPTMIVALVFDS, WLNVLQSVQIPFAVIPLLCLV, ISWIVAALVIAINGYLMVDFF, and ILLVPVIIFAIAYVVFVLYLI.

It belongs to the NRAMP (TC 2.A.55) family. In terms of tissue distribution, expressed in vascular tissues.

The protein resides in the vacuole membrane. Its function is as follows. Vacuolar metal transporter involved in intracellular metal homeostasis. Can transport iron (Fe), manganese (Mn) and cadmium (Cd). Regulates metal accumulation under Fe starvation. Acts redundantly with NRAMP3 to mobilize vacuolar Fe and provide sufficient Fe during seed germination. In association with NRAMP3, required for optimal growth and photosynthesis under Mn deficiency. Exports Mn from vacuoles in leaf mesophyll cells, making Mn available for functional photosystem II in chloroplasts. This is Metal transporter Nramp4 (NRAMP4) from Arabidopsis thaliana (Mouse-ear cress).